Consider the following 317-residue polypeptide: MAPPPAMKPASRKRGPPAPDPVELPPPGFVADRAEAAARVERLLRYQFRDGRLLEEALTHQSFADDAVSYQRLEFVGDSALGLAFSNFLYLTNPTLGPGPLSTLRAANISTEKLARVAVRHDLYPLLRRNCPRLDLLVGQFIETVKQEPEDDLSTVPYGGSVVKAPKVLADIVEAIAAAVYVDCKFDLEKLWKVTRWLFEPIITAETIDEQPVTMLHELCQKHGKMAQFKTWQKGGMTVVNVFVAGELVGIGSSEQKVIAKLNAARDATRKLAGAKKQVLTTGVGNGLGDEIGELRECKQKLNEQCSRQNWPKPIFK.

The disordered stretch occupies residues 1 to 26 (MAPPPAMKPASRKRGPPAPDPVELPP). The span at 16-26 (PPAPDPVELPP) shows a compositional bias: pro residues. Residues 37–185 (AARVERLLRY…IAAAVYVDCK (149 aa)) enclose the RNase III domain. Residues Glu74, Asp171, and Glu174 each coordinate Mg(2+). Residues 211–274 (QPVTMLHELC…ARDATRKLAG (64 aa)) form the DRBM domain.

Mg(2+) serves as cofactor. The cofactor is Mn(2+).

Functionally, cleaves double-stranded RNA (dsRNA). The protein is Ribonuclease 3-like protein 2 of Oryza sativa subsp. japonica (Rice).